The chain runs to 317 residues: Melanocyte-stimulating hormone receptor (317 aa).

The tract at residues 1-26 (MPVQGSPRSLLGAVNSTPTATPHLRP) is disordered. The Extracellular segment spans residues 1 to 37 (MPVQGSPRSLLGAVNSTPTATPHLRPAANQTGPQCLE). N-linked (GlcNAc...) asparagine glycosylation occurs at asparagine 29. The helical transmembrane segment at 38-63 (VSIPDGLFLCLGLVSLVENTLVVAAI) threads the bilayer. Residues 64–72 (AKNRNLHSP) are Cytoplasmic-facing. The helical transmembrane segment at 73 to 93 (MYCFVCCLALSDLLVSVSSVL) threads the bilayer. The Extracellular segment spans residues 94–118 (ETAVLLLLGAGALAAQATVVQLLGN). Residues 119–140 (VIDVLLCSSMVSSLFFLGAIAM) form a helical membrane-spanning segment. Residues 141–163 (DRYISIFYALRYHSIVTLARARR) are Cytoplasmic-facing. Residues 164-183 (AIAAIWAASMLSSTLFIAYC) traverse the membrane as a helical segment. Over 184 to 191 (DHTAALLC) the chain is Extracellular. A helical membrane pass occupies residues 192–211 (LVVFFLAMLVLMAVLYVHML). The Cytoplasmic portion of the chain corresponds to 212–240 (TQACQHAQGIARLHKRQRPVQQGWGLKGA). Residues 241–266 (ATLAILLGVFFLCWGPFFLHLTLIAV) form a helical membrane-spanning segment. The Extracellular portion of the chain corresponds to 267–279 (CPQHPTCSCIFKN). Residues 280–300 (FRLFLALIVCNAIVDPLIYAF) form a helical membrane-spanning segment. The Cytoplasmic portion of the chain corresponds to 301–317 (RSQELCKTLKELLLFSW).

Belongs to the G-protein coupled receptor 1 family. In terms of assembly, interacts with MGRN1, but does not undergo MGRN1-mediated ubiquitination; this interaction competes with GNAS-binding and thus inhibits agonist-induced cAMP production. Interacts with OPN3; the interaction results in a decrease in MC1R-mediated cAMP signaling and ultimately a decrease in melanin production in melanocytes.

The protein resides in the cell membrane. Its function is as follows. Receptor for MSH (alpha, beta and gamma) and ACTH. The activity of this receptor is mediated by G proteins which activate adenylate cyclase. Mediates melanogenesis, the production of eumelanin (black/brown) and phaeomelanin (red/yellow), via regulation of cAMP signaling in melanocytes. The protein is Melanocyte-stimulating hormone receptor (MC1R) of Hapalemur griseus (Gray gentle lemur).